Reading from the N-terminus, the 337-residue chain is Viral cathepsin (337 aa).

The N-terminal stretch at 1–16 is a signal peptide; that stretch reads MNKILILLLLVSAVLT. The propeptide at 17–126 is activation peptide; that stretch reads SHDQVVAVTI…VVDGPGQRQR (110 aa). Disulfide bonds link C147–C188, C181–C221, and C276–C324. C150 is a catalytic residue. Active-site residues include H283 and N303.

This sequence belongs to the peptidase C1 family. Synthesized as an inactive proenzyme and activated by proteolytic removal of the inhibitory propeptide.

It catalyses the reaction Endopeptidase of broad specificity, hydrolyzing substrates of both cathepsin L and cathepsin B.. Its function is as follows. Cysteine protease that plays an essential role in host liquefaction to facilitate horizontal transmission of the virus. May participate in the degradation of foreign protein expressed by the baculovirus system. The polypeptide is Viral cathepsin (VCATH) (Mamestra configurata (bertha armyworm)).